Consider the following 275-residue polypeptide: Undecaprenyl-diphosphatase (275 aa).

8 consecutive transmembrane segments (helical) span residues 1 to 21 (MDWV…FLPI), 42 to 62 (VKDA…LVYY), 80 to 100 (TLWT…LAFG), 107 to 127 (LFKP…MWLI), 147 to 167 (SLLI…SRSA), 184 to 204 (TKFS…LNLV), 214 to 234 (IGLL…YLAI), and 249 to 269 (FAVY…TGVM).

It belongs to the UppP family.

It is found in the cell membrane. The enzyme catalyses di-trans,octa-cis-undecaprenyl diphosphate + H2O = di-trans,octa-cis-undecaprenyl phosphate + phosphate + H(+). Functionally, catalyzes the dephosphorylation of undecaprenyl diphosphate (UPP). Confers resistance to bacitracin. This is Undecaprenyl-diphosphatase from Deinococcus deserti (strain DSM 17065 / CIP 109153 / LMG 22923 / VCD115).